The following is a 143-amino-acid chain: Endoribonuclease YbeY (143 aa).

The Zn(2+) site is built by H109, H113, and H119.

This sequence belongs to the endoribonuclease YbeY family. Requires Zn(2+) as cofactor.

The protein resides in the cytoplasm. Single strand-specific metallo-endoribonuclease involved in late-stage 70S ribosome quality control and in maturation of the 3' terminus of the 16S rRNA. The chain is Endoribonuclease YbeY from Carboxydothermus hydrogenoformans (strain ATCC BAA-161 / DSM 6008 / Z-2901).